The chain runs to 365 residues: Alanine racemase (365 aa).

Lys-32 acts as the Proton acceptor; specific for D-alanine in catalysis. Lys-32 carries the post-translational modification N6-(pyridoxal phosphate)lysine. Arg-128 contacts substrate. Tyr-257 serves as the catalytic Proton acceptor; specific for L-alanine. Met-305 contacts substrate.

The protein belongs to the alanine racemase family. Pyridoxal 5'-phosphate is required as a cofactor.

The enzyme catalyses L-alanine = D-alanine. Its pathway is amino-acid biosynthesis; D-alanine biosynthesis; D-alanine from L-alanine: step 1/1. Functionally, catalyzes the interconversion of L-alanine and D-alanine. May also act on other amino acids. The chain is Alanine racemase (alr) from Francisella tularensis subsp. tularensis (strain SCHU S4 / Schu 4).